Reading from the N-terminus, the 100-residue chain is Dromyosuppressin (100 aa).

The N-terminal stretch at methionine 1 to alanine 24 is a signal peptide. A propeptide spanning residues alanine 25–asparagine 84 is cleaved from the precursor. Phenylalanine 96 is subject to Phenylalanine amide.

This sequence belongs to the myosuppressin family.

The protein localises to the secreted. Functionally, myoinhibiting neuropeptide. The chain is Dromyosuppressin from Drosophila melanogaster (Fruit fly).